Reading from the N-terminus, the 144-residue chain is Large ribosomal subunit protein uL15 (144 aa).

A disordered region spans residues 1 to 48; the sequence is MRLNTLSPAAGSKSAAKRVGRGIGSGTGKTCGRGHKGQKSRSGGGVRI. Over residues 21–31 the composition is skewed to gly residues; sequence RGIGSGTGKTC.

The protein belongs to the universal ribosomal protein uL15 family. In terms of assembly, part of the 50S ribosomal subunit.

In terms of biological role, binds to the 23S rRNA. This Shewanella woodyi (strain ATCC 51908 / MS32) protein is Large ribosomal subunit protein uL15.